The sequence spans 1177 residues: DNA-directed RNA polymerase subunit beta (1177 aa).

Over residues 1147-1161 (DDTEIEMRDTEDDDD) the composition is skewed to acidic residues. The tract at residues 1147-1177 (DDTEIEMRDTEDDDDHQSADKLNVEVETTKE) is disordered. Over residues 1162 to 1177 (HQSADKLNVEVETTKE) the composition is skewed to basic and acidic residues.

Belongs to the RNA polymerase beta chain family. In terms of assembly, the RNAP catalytic core consists of 2 alpha, 1 beta, 1 beta' and 1 omega subunit. When a sigma factor is associated with the core the holoenzyme is formed, which can initiate transcription.

It catalyses the reaction RNA(n) + a ribonucleoside 5'-triphosphate = RNA(n+1) + diphosphate. In terms of biological role, DNA-dependent RNA polymerase catalyzes the transcription of DNA into RNA using the four ribonucleoside triphosphates as substrates. This chain is DNA-directed RNA polymerase subunit beta, found in Bacillus anthracis (strain A0248).